Consider the following 180-residue polypeptide: Adenine phosphoribosyltransferase (180 aa).

Ala-2 carries the N-acetylalanine modification. Phosphoserine occurs at positions 15 and 30. At Tyr-60 the chain carries Phosphotyrosine. The residue at position 66 (Ser-66) is a Phosphoserine. A Phosphothreonine modification is found at Thr-135.

Belongs to the purine/pyrimidine phosphoribosyltransferase family. As to quaternary structure, homodimer.

The protein resides in the cytoplasm. The catalysed reaction is AMP + diphosphate = 5-phospho-alpha-D-ribose 1-diphosphate + adenine. It functions in the pathway purine metabolism; AMP biosynthesis via salvage pathway; AMP from adenine: step 1/1. In terms of biological role, catalyzes a salvage reaction resulting in the formation of AMP, that is energically less costly than de novo synthesis. The protein is Adenine phosphoribosyltransferase of Bos taurus (Bovine).